Reading from the N-terminus, the 719-residue chain is Forkhead box protein K1 (719 aa).

N-acetylalanine is present on alanine 2. An interaction with SIN3A and SIN3B region spans residues 2–40 (AEVGEDSGARALLALRSAPCSPVLCAAAAAAAFPATTSP). Residues 35–67 (PATTSPPPPAQPPPGPPALPAEPGPGPVPSTVA) form a disordered region. Residues 38–62 (TSPPPPAQPPPGPPALPAEPGPGPV) show a composition bias toward pro residues. Residues 81 to 406 (AASVRQSPGP…PLSSRSAPAS (326 aa)) are required for interaction with FOXO4 and MEF2C. Serine 87 bears the Phosphoserine mark. In terms of domain architecture, FHA spans 109 to 161 (VTIGRNSSQGSVDLSMGLSSFISRRHLQLSFQEPHFYLRCLGKNGVFVDGAFQ). Residues arginine 147 and arginine 177 each carry the omega-N-methylarginine modification. Residues serine 199, serine 209, serine 225, and serine 229 each carry the phosphoserine modification. Phosphothreonine is present on residues threonine 231 and threonine 233. Phosphoserine occurs at positions 239, 243, 281, and 285. A DNA-binding region (fork-head) is located at residues 291-386 (KPPYSYAQLI…EQAFRKRRQR (96 aa)). A disordered region spans residues 399–443 (SSRSAPASPTHPGLMSPRSSGLQTPECLSREGSPIPHDPDLGSKL). Residues serine 402 and serine 406 each carry the phosphoserine modification. Phosphothreonine is present on threonine 408. Position 414 is a phosphoserine (serine 414). Threonine 422 carries the post-translational modification Phosphothreonine. A phosphoserine mark is found at serine 427, serine 431, and serine 445. Residues 665–685 (AANAAPTPAASTTTSASSSGE) show a composition bias toward low complexity. Residues 665–719 (AANAAPTPAASTTTSASSSGEPEVKRSRVEEPGGTATTQPTAMAATGPQGPGTGE) form a disordered region. Residues 686–695 (PEVKRSRVEE) show a composition bias toward basic and acidic residues. A compositionally biased stretch (low complexity) spans 696–712 (PGGTATTQPTAMAATGP).

Interacts with SIN3A and SIN3B (via PAH2) to form a complex which represses transcription. Component of SIN3A-, but not SIN3B-, containing multiprotein complexes. Interacts with FOXO4 and MEF2C; both interactions inhibit FOXO4 and MEF2C transactivation activity. Interacts (when phosphorylated) with YWHAE/14-3-3-epsilon; promotes sequestration in the cytoplasm and leads to impaired ability to bind DNA. Interacts with FHL2. Interacts with SRF. Interacts with DVL2 and DVL3; the interaction induces DVL2 nuclear translocation. Interacts with BAP1 (when phosphorylated). Accessory component of the polycomb repressive deubiquitinase (PR-DUB) complex, at least composed of BAP1, one of ASXL1, ASXL2 or (probably) ASXL3 and one of MBD5 or MBD6. The PR-DUB core associates with a number of accessory proteins, including FOXK1, FOXK2, KDM1B, HCFC1 and OGT. Phosphorylation by GSK3 (GSK3A or GSK3B) promotes interaction with YWHAE/14-3-3-epsilon and retention in the cytoplasm. In response to mTORC1 signaling, phosphorylation by GSK3 is prevented, leading to translocation to the nucleus. In terms of tissue distribution, expressed in tissues and cells in which the myoglobin gene is transcriptionally active including cardiac and skeletal myocytes, brain and kidney. In the adult brain, expressed in the piriform cortex and the indusium griseum. In the hippocampus, expression is localized to the dentate gyrus and CA3 area. In the cerebellum, expression is confined to the Purkinje cell layer. Present in neuroretinal cells: expressed in rod bipolar cells, amacrine cells and ganglion cells (at protein level).

The protein resides in the nucleus. Its subcellular location is the cytoplasm. In terms of biological role, transcriptional regulator involved in different processes such as glucose metabolism, aerobic glycolysis, muscle cell differentiation and autophagy. Recognizes and binds the forkhead DNA sequence motif (5'-GTAAACA-3') and can both act as a transcription activator or repressor, depending on the context. Together with FOXK2, acts as a key regulator of metabolic reprogramming towards aerobic glycolysis, a process in which glucose is converted to lactate in the presence of oxygen. Acts by promoting expression of enzymes for glycolysis (such as hexokinase-2 (HK2), phosphofructokinase, pyruvate kinase (PKLR) and lactate dehydrogenase), while suppressing further oxidation of pyruvate in the mitochondria by up-regulating pyruvate dehydrogenase kinases PDK1 and PDK4. Probably plays a role in gluconeogenesis during overnight fasting, when lactate from white adipose tissue and muscle is the main substrate. Involved in mTORC1-mediated metabolic reprogramming: in response to mTORC1 signaling, translocates into the nucleus and regulates the expression of genes associated with glycolysis and downstream anabolic pathways, such as HIF1A, thereby regulating glucose metabolism. Together with FOXK2, acts as a negative regulator of autophagy in skeletal muscle: in response to starvation, enters the nucleus, binds the promoters of autophagy genes and represses their expression, preventing proteolysis of skeletal muscle proteins. Acts as a transcriptional regulator of the myogenic progenitor cell population in skeletal muscle. Binds to the upstream enhancer region (CCAC box) of myoglobin (MB) gene, regulating the myogenic progenitor cell population. Promotes muscle progenitor cell proliferation by repressing the transcriptional activity of FOXO4, thereby inhibiting myogenic differentiation. Involved in remodeling processes of adult muscles that occur in response to physiological stimuli. Required to correct temporal orchestration of molecular and cellular events necessary for muscle repair. Represses myogenic differentiation by inhibiting MEFC activity. Positively regulates Wnt/beta-catenin signaling by translocating DVL into the nucleus. Reduces virus replication, probably by binding the interferon stimulated response element (ISRE) to promote antiviral gene expression. Accessory component of the polycomb repressive deubiquitinase (PR-DUB) complex; recruits the PR-DUB complex to specific FOXK1-bound genes. In Mus musculus (Mouse), this protein is Forkhead box protein K1.